Here is a 206-residue protein sequence, read N- to C-terminus: Protein-methionine-sulfoxide reductase heme-binding subunit MsrQ (206 aa).

Transmembrane regions (helical) follow at residues 13-33 (IAIW…INLG), 79-99 (LLGL…SILE), 116-136 (PYLT…LTST), 147-167 (WQKL…HYLW), and 169-189 (VKTL…LLLL).

Belongs to the MsrQ family. Heterodimer of a catalytic subunit (MsrP) and a heme-binding subunit (MsrQ). The cofactor is FMN. It depends on heme b as a cofactor.

Its subcellular location is the cell inner membrane. Part of the MsrPQ system that repairs oxidized periplasmic proteins containing methionine sulfoxide residues (Met-O), using respiratory chain electrons. Thus protects these proteins from oxidative-stress damage caused by reactive species of oxygen and chlorine generated by the host defense mechanisms. MsrPQ is essential for the maintenance of envelope integrity under bleach stress, rescuing a wide series of structurally unrelated periplasmic proteins from methionine oxidation. MsrQ provides electrons for reduction to the reductase catalytic subunit MsrP, using the quinone pool of the respiratory chain. The chain is Protein-methionine-sulfoxide reductase heme-binding subunit MsrQ from Yersinia pestis bv. Antiqua (strain Antiqua).